The sequence spans 176 residues: Adenine phosphoribosyltransferase (176 aa).

The protein belongs to the purine/pyrimidine phosphoribosyltransferase family. As to quaternary structure, homodimer.

It is found in the cytoplasm. The catalysed reaction is AMP + diphosphate = 5-phospho-alpha-D-ribose 1-diphosphate + adenine. The protein operates within purine metabolism; AMP biosynthesis via salvage pathway; AMP from adenine: step 1/1. Functionally, catalyzes a salvage reaction resulting in the formation of AMP, that is energically less costly than de novo synthesis. In Thermobifida fusca (strain YX), this protein is Adenine phosphoribosyltransferase.